A 288-amino-acid chain; its full sequence is Small ribosomal subunit protein uS3 (288 aa).

The KH type-2 domain maps to 38-106 (IRRMMSKGLE…QVQLNIIEVK (69 aa)). The tract at residues 209–288 (PGRETPAEAP…TQPAETQQEG (80 aa)) is disordered. Basic and acidic residues predominate over residues 219-232 (SRPRRERGDRSERP). Low complexity predominate over residues 249-264 (AGRAAATTIAQAAETP). The span at 277–288 (AATQPAETQQEG) shows a compositional bias: polar residues.

The protein belongs to the universal ribosomal protein uS3 family. Part of the 30S ribosomal subunit. Forms a tight complex with proteins S10 and S14.

Its function is as follows. Binds the lower part of the 30S subunit head. Binds mRNA in the 70S ribosome, positioning it for translation. This chain is Small ribosomal subunit protein uS3, found in Salinispora tropica (strain ATCC BAA-916 / DSM 44818 / JCM 13857 / NBRC 105044 / CNB-440).